The sequence spans 491 residues: Protein nucleotidyltransferase YdiU (491 aa).

ATP-binding residues include glycine 94, glycine 96, arginine 97, lysine 117, aspartate 129, glycine 130, arginine 180, and arginine 187. The Proton acceptor role is filled by aspartate 256. Asparagine 257 and aspartate 266 together coordinate Mg(2+). Residue aspartate 266 participates in ATP binding.

It belongs to the SELO family. Mg(2+) is required as a cofactor. Requires Mn(2+) as cofactor.

The catalysed reaction is L-seryl-[protein] + ATP = 3-O-(5'-adenylyl)-L-seryl-[protein] + diphosphate. It catalyses the reaction L-threonyl-[protein] + ATP = 3-O-(5'-adenylyl)-L-threonyl-[protein] + diphosphate. The enzyme catalyses L-tyrosyl-[protein] + ATP = O-(5'-adenylyl)-L-tyrosyl-[protein] + diphosphate. It carries out the reaction L-histidyl-[protein] + UTP = N(tele)-(5'-uridylyl)-L-histidyl-[protein] + diphosphate. The catalysed reaction is L-seryl-[protein] + UTP = O-(5'-uridylyl)-L-seryl-[protein] + diphosphate. It catalyses the reaction L-tyrosyl-[protein] + UTP = O-(5'-uridylyl)-L-tyrosyl-[protein] + diphosphate. Nucleotidyltransferase involved in the post-translational modification of proteins. It can catalyze the addition of adenosine monophosphate (AMP) or uridine monophosphate (UMP) to a protein, resulting in modifications known as AMPylation and UMPylation. This is Protein nucleotidyltransferase YdiU from Clostridium botulinum (strain Eklund 17B / Type B).